The following is a 631-amino-acid chain: Mu-like prophage FluMu protein gp42 (631 aa).

A run of 2 helical transmembrane segments spans residues 56-76 (LGNI…TMVG) and 385-405 (GLAD…PVYV). The segment at 425–453 (IEDGRDKDKKTQKKNKPPRPKRGRGSVRS) is disordered. A compositionally biased stretch (basic residues) spans 434-449 (KTQKKNKPPRPKRGRG). The next 3 membrane-spanning stretches (helical) occupy residues 455–475 (VAAV…VTTA), 495–515 (SKAV…TVLM), and 543–563 (ALIP…GWLG).

It to phage Mu protein gp42.

The protein localises to the cell membrane. This is Mu-like prophage FluMu protein gp42 from Haemophilus influenzae (strain ATCC 51907 / DSM 11121 / KW20 / Rd).